The primary structure comprises 252 residues: Zinc finger protein 511 (252 aa).

3 consecutive C2H2-type zinc fingers follow at residues 80–105 (FACQVAGCCQVFDALDDYEHHYHTLH), 107–130 (NVCSFCKRAFPSGHLLDAHILEWH), and 144–169 (YQCLVEGCTEKFKTSRDRKDHMVRMH). Positions 177 to 221 (FDKPKKSRSPASAEAPGDSGERSEGEAMEICSEPVAASPAPAGER) are disordered. The residue at position 240 (Arg240) is an Omega-N-methylarginine.

The protein belongs to the krueppel C2H2-type zinc-finger protein family.

Its subcellular location is the nucleus. Its function is as follows. May be involved in transcriptional regulation. The chain is Zinc finger protein 511 from Homo sapiens (Human).